The following is a 41-amino-acid chain: uncharacterized protein (41 aa).

Positions 1–12 are enriched in basic and acidic residues; sequence MTRNVVRQEFEA. The interval 1–23 is disordered; that stretch reads MTRNVVRQEFEAPGKPQDSSQQD.

This is an uncharacterized protein from Homo sapiens (Human).